A 531-amino-acid polypeptide reads, in one-letter code: NAD(P)H-quinone oxidoreductase chain 4 (531 aa).

Helical transmembrane passes span 9–29 (FPWL…IPFF), 41–61 (FALS…INGF), 93–113 (MPLI…AWPV), 117–137 (PKLF…VFAV), 141–161 (LLFF…LAIW), 173–193 (FIIY…AMGF), 217–237 (IFCY…VPLH), 248–268 (TAPV…YALL), 282–302 (FAPL…LTSF), 311–331 (IAYS…SFSS), 337–357 (AMLQ…LVGA), 381–401 (FALW…SGFV), 422–442 (VVMA…LLSM), and 469–489 (VYII…PRLV).

Belongs to the complex I subunit 4 family.

The protein localises to the cellular thylakoid membrane. It catalyses the reaction a plastoquinone + NADH + (n+1) H(+)(in) = a plastoquinol + NAD(+) + n H(+)(out). The enzyme catalyses a plastoquinone + NADPH + (n+1) H(+)(in) = a plastoquinol + NADP(+) + n H(+)(out). Functionally, NDH-1 shuttles electrons from NAD(P)H, via FMN and iron-sulfur (Fe-S) centers, to quinones in the respiratory chain. The immediate electron acceptor for the enzyme in this species is believed to be plastoquinone. Couples the redox reaction to proton translocation (for every two electrons transferred, four hydrogen ions are translocated across the cytoplasmic membrane), and thus conserves the redox energy in a proton gradient. This chain is NAD(P)H-quinone oxidoreductase chain 4, found in Prochlorococcus marinus (strain MIT 9301).